A 1127-amino-acid polypeptide reads, in one-letter code: Elongation factor-like GTPase 1 (1127 aa).

Residues 17–272 (ANIRNICVLA…LLKTLWGDYY (256 aa)) enclose the tr-type G domain. GTP-binding positions include 26–33 (AHVDHGKT), 92–96 (DSPGH), and 146–149 (NKID). The segment at 429–496 (KPRPLTQEEM…VASVSRQPVS (68 aa)) is disordered. Composition is skewed to basic and acidic residues over residues 438-452 (MAQRRERARQRHAEK) and 474-484 (SPHEDEPRGDE). K528 bears the N6-acetyllysine mark.

Belongs to the TRAFAC class translation factor GTPase superfamily. Classic translation factor GTPase family. As to quaternary structure, associates with the 60S ribosomal subunit. Found in a complex consisting of the 60S ribosomal subunit, SBDS and EFL1.

It catalyses the reaction GTP + H2O = GDP + phosphate + H(+). With respect to regulation, GTPase activity is stimulated in the presence of 60S ribosome subunits. Functionally, GTPase involved in the biogenesis of the 60S ribosomal subunit and translational activation of ribosomes. Together with SBDS, triggers the GTP-dependent release of EIF6 from 60S pre-ribosomes in the cytoplasm, thereby activating ribosomes for translation competence by allowing 80S ribosome assembly and facilitating EIF6 recycling to the nucleus, where it is required for 60S rRNA processing and nuclear export. The chain is Elongation factor-like GTPase 1 (Efl1) from Mus musculus (Mouse).